A 279-amino-acid chain; its full sequence is Energy-coupling factor transporter ATP-binding protein EcfA (279 aa).

The ABC transporter domain maps to 4-239; the sequence is VETKDLYFRY…VETIRKANLR (236 aa). An ATP-binding site is contributed by 37-44; the sequence is GPNGAGKS.

The protein belongs to the ABC transporter superfamily. Energy-coupling factor EcfA family. In terms of assembly, forms a stable energy-coupling factor (ECF) transporter complex composed of 2 membrane-embedded substrate-binding proteins (S component), 2 ATP-binding proteins (A component) and 2 transmembrane proteins (T component).

The protein localises to the cell membrane. In terms of biological role, ATP-binding (A) component of a common energy-coupling factor (ECF) ABC-transporter complex. Unlike classic ABC transporters this ECF transporter provides the energy necessary to transport a number of different substrates. The protein is Energy-coupling factor transporter ATP-binding protein EcfA of Methanocaldococcus jannaschii (strain ATCC 43067 / DSM 2661 / JAL-1 / JCM 10045 / NBRC 100440) (Methanococcus jannaschii).